Consider the following 219-residue polypeptide: ADP-sugar pyrophosphatase (219 aa).

M1 bears the N-acetylmethionine mark. 2 positions are modified to phosphoserine: S3 and S10. Substrate is bound at residue W28. K42 participates in a covalent cross-link: Glycyl lysine isopeptide (Lys-Gly) (interchain with G-Cter in SUMO2). A Phosphothreonine modification is found at T45. Residues 46-47 and R51 contribute to the substrate site; that span reads WE. One can recognise a Nudix hydrolase domain in the interval 57–197; it reads QTADGVAVIP…EEHLTVDARV (141 aa). Y74 bears the Phosphotyrosine mark. R84 is a binding site for substrate. A96 is a binding site for Mg(2+). The Nudix box motif lies at 97–118; it reads GLIDDGETPEAAALRELEEETG. L98 serves as a coordination point for substrate. Positions 112 and 116 each coordinate Mg(2+). D133 contacts substrate. Residue E166 participates in Mg(2+) binding. K210 and K218 each carry N6-acetyllysine.

It belongs to the Nudix hydrolase family. As to quaternary structure, homodimer. Interacts with PARG. Mg(2+) is required as a cofactor. In terms of processing, phosphorylation at Thr-45 is required for homodimer stability; dephosphorylation results in destabilization of the homodimer. Dephosphorylation at Thr-45 promotes the ATP-synthesis activity. In terms of tissue distribution, widely expressed. Most abundant in liver.

It localises to the nucleus. It catalyses the reaction D-ribose 5-phosphate + ATP + H(+) = ADP-D-ribose + diphosphate. It carries out the reaction ADP-D-ribose + H2O = D-ribose 5-phosphate + AMP + 2 H(+). The catalysed reaction is 8-oxo-dGDP + H2O = 8-oxo-dGMP + phosphate + H(+). In terms of biological role, enzyme that can either act as an ADP-sugar pyrophosphatase in absence of diphosphate or catalyze the synthesis of ATP in presence of diphosphate. In absence of diphosphate, hydrolyzes with similar activities various modified nucleoside diphosphates such as ADP-ribose, ADP-mannose, ADP-glucose, 8-oxo-GDP and 8-oxo-dGDP. Can also hydrolyze other nucleotide sugars with low activity. In presence of diphosphate, mediates the synthesis of ATP in the nucleus by catalyzing the conversion of ADP-ribose to ATP and ribose 5-phosphate. Nuclear ATP synthesis takes place when dephosphorylated at Thr-45. Nuclear ATP generation is required for extensive chromatin remodeling events that are energy-consuming. Does not play a role in U8 snoRNA decapping activity. Binds U8 snoRNA. The protein is ADP-sugar pyrophosphatase (NUDT5) of Homo sapiens (Human).